A 106-amino-acid chain; its full sequence is Pyrimidine/purine nucleoside phosphorylase (106 aa).

This sequence belongs to the nucleoside phosphorylase PpnP family.

It carries out the reaction a purine D-ribonucleoside + phosphate = a purine nucleobase + alpha-D-ribose 1-phosphate. The catalysed reaction is adenosine + phosphate = alpha-D-ribose 1-phosphate + adenine. The enzyme catalyses cytidine + phosphate = cytosine + alpha-D-ribose 1-phosphate. It catalyses the reaction guanosine + phosphate = alpha-D-ribose 1-phosphate + guanine. It carries out the reaction inosine + phosphate = alpha-D-ribose 1-phosphate + hypoxanthine. The catalysed reaction is thymidine + phosphate = 2-deoxy-alpha-D-ribose 1-phosphate + thymine. The enzyme catalyses uridine + phosphate = alpha-D-ribose 1-phosphate + uracil. It catalyses the reaction xanthosine + phosphate = alpha-D-ribose 1-phosphate + xanthine. Its function is as follows. Catalyzes the phosphorolysis of diverse nucleosides, yielding D-ribose 1-phosphate and the respective free bases. Can use uridine, adenosine, guanosine, cytidine, thymidine, inosine and xanthosine as substrates. Also catalyzes the reverse reactions. This chain is Pyrimidine/purine nucleoside phosphorylase, found in Burkholderia cenocepacia (strain ATCC BAA-245 / DSM 16553 / LMG 16656 / NCTC 13227 / J2315 / CF5610) (Burkholderia cepacia (strain J2315)).